Reading from the N-terminus, the 350-residue chain is Hydroxymethylglutaryl-CoA synthase (350 aa).

Residue glutamate 83 is the Proton donor/acceptor of the active site. The active-site Acyl-thioester intermediate is cysteine 115. Residues cysteine 115 and threonine 156 each contribute to the (3S)-3-hydroxy-3-methylglutaryl-CoA site. Residue arginine 204 coordinates CoA. 2 residues coordinate (3S)-3-hydroxy-3-methylglutaryl-CoA: threonine 206 and histidine 239. Histidine 239 acts as the Proton donor/acceptor in catalysis. Residue lysine 244 coordinates CoA. Residues asparagine 271 and serine 301 each contribute to the (3S)-3-hydroxy-3-methylglutaryl-CoA site.

Belongs to the thiolase-like superfamily. Archaeal HMG-CoA synthase family. In terms of assembly, interacts with acetoacetyl-CoA thiolase that catalyzes the precedent step in the pathway and with a DUF35 protein. The acetoacetyl-CoA thiolase/HMG-CoA synthase complex channels the intermediate via a fused CoA-binding site, which allows for efficient coupling of the endergonic thiolase reaction with the exergonic HMGCS reaction.

The enzyme catalyses acetoacetyl-CoA + acetyl-CoA + H2O = (3S)-3-hydroxy-3-methylglutaryl-CoA + CoA + H(+). Its pathway is metabolic intermediate biosynthesis; (R)-mevalonate biosynthesis; (R)-mevalonate from acetyl-CoA: step 2/3. In terms of biological role, catalyzes the condensation of acetyl-CoA with acetoacetyl-CoA to form 3-hydroxy-3-methylglutaryl-CoA (HMG-CoA). Functions in the mevalonate (MVA) pathway leading to isopentenyl diphosphate (IPP), a key precursor for the biosynthesis of isoprenoid compounds that are building blocks of archaeal membrane lipids. The polypeptide is Hydroxymethylglutaryl-CoA synthase (Pyrococcus furiosus (strain ATCC 43587 / DSM 3638 / JCM 8422 / Vc1)).